We begin with the raw amino-acid sequence, 279 residues long: Probable autolysin LDP (279 aa).

Residues 1–24 form the signal peptide; the sequence is MKKSLTVTVSSVLAFLALNNAAHA. One can recognise a LysM domain in the interval 51-94; it reads TTYTVVAGDSLYKIALEHHLTLNQLYSYNPGVTPLIFPGDVISL. The Peptidase C51 domain maps to 158 to 279; the sequence is VPTVPVAHNY…LNPGKYNYIH (122 aa).

The enzyme catalyses Hydrolyzes the link between N-acetylmuramoyl residues and L-amino acid residues in certain cell-wall glycopeptides.. Functionally, has weak lytic activity toward S.aureus cells. The protein is Probable autolysin LDP of Staphylococcus aureus (strain NCTC 8325 / PS 47).